The sequence spans 535 residues: MAKKVAVIGAGVSGLISLKCCVDEGLEPTCFERTEDIGGVWRFKENVEDGRASIYQSVITNTSKEMSCFSDFPMPEDFPNFLHNSKLLEYFRIFAKKFDLLKYIQFQTTVLSVRKCPDFSSSGQWKVVTQSNGKEQSAVFDAVMVCSGHHILPHIPLKSFPGIERFKGQYFHSRQYKHPDGFEGKRILVIGMGNSGSDIAVELSKNAAQVFISTRHGTWVMSRISEDGYPWDSVFHTRFRSMLRNVLPRTAVKWMIEQQMNRWFNHENYGLEPQNKYIMKEPVLNDDVPSRLLCGAIKVKSTVKELTETSAIFEDGTVEENIDVIIFATGYSFSFPFLEDSLVKVENNMVSLYKYIFPAHLDKSTLACIGLIQPLGSIFPTAELQARWVTRVFKGLCSLPSERTMMMDIIKRNEKRIDLFGESQSQTLQTNYVDYLDELALEIGAKPDFCSLLFKDPKLAVRLYFGPCNSYQYRLVGPGQWEGARNAIFTQKQRILKPLKTRALKDSSNFSVSFLLKILGLLAVVVAFFCQLQWS.

At Ala-2 the chain carries N-acetylalanine. Residues 9 to 13 (GAGVS), Glu-32, 40 to 41 (VW), and 61 to 62 (NT) each bind FAD. NADP(+) is bound by residues 60-61 (TN) and 195-198 (SGSD). Residue Lys-492 forms a Glycyl lysine isopeptide (Lys-Gly) (interchain with G-Cter in SUMO) linkage. A helical transmembrane segment spans residues 510-530 (FSVSFLLKILGLLAVVVAFFC).

Belongs to the FMO family. The cofactor is FAD. Requires Mg(2+) as cofactor.

The protein localises to the microsome membrane. Its subcellular location is the endoplasmic reticulum membrane. Its function is as follows. Catalyzes the oxidative metabolism of numerous xenobiotics, including mainly therapeutic drugs and insecticides that contain a soft nucleophile, most commonly nitrogen and sulfur and participates to their bioactivation. The chain is Dimethylaniline monooxygenase [N-oxide-forming] 2 from Pan troglodytes (Chimpanzee).